The following is a 657-amino-acid chain: Glycogen debranching enzyme (657 aa).

The Nucleophile role is filled by Asp-336. Glu-371 (proton donor) is an active-site residue. The disordered stretch occupies residues 460 to 479; the sequence is ANGEENRDGTNNNYSNNHGK.

This sequence belongs to the glycosyl hydrolase 13 family.

The catalysed reaction is Hydrolysis of (1-&gt;6)-alpha-D-glucosidic linkages to branches with degrees of polymerization of three or four glucose residues in limit dextrin.. Its pathway is glycan degradation; glycogen degradation. In terms of biological role, removes maltotriose and maltotetraose chains that are attached by 1,6-alpha-linkage to the limit dextrin main chain, generating a debranched limit dextrin. This Escherichia coli O9:H4 (strain HS) protein is Glycogen debranching enzyme.